The sequence spans 505 residues: Glutamyl-tRNA(Gln) amidotransferase subunit B, mitochondrial (505 aa).

This sequence belongs to the GatB/GatE family. GatB subfamily. Subunit of the heterotrimeric GatCAB amidotransferase (AdT) complex, composed of A, B and C subunits.

It localises to the mitochondrion. The catalysed reaction is L-glutamyl-tRNA(Gln) + L-glutamine + ATP + H2O = L-glutaminyl-tRNA(Gln) + L-glutamate + ADP + phosphate + H(+). Its function is as follows. Allows the formation of correctly charged Gln-tRNA(Gln) through the transamidation of misacylated Glu-tRNA(Gln) in the mitochondria. The reaction takes place in the presence of glutamine and ATP through an activated gamma-phospho-Glu-tRNA(Gln). The sequence is that of Glutamyl-tRNA(Gln) amidotransferase subunit B, mitochondrial from Schizosaccharomyces japonicus (strain yFS275 / FY16936) (Fission yeast).